Reading from the N-terminus, the 381-residue chain is Nitric oxide reductase FlRd-NAD(+) reductase (381 aa).

Belongs to the FAD-dependent oxidoreductase family. It depends on FAD as a cofactor.

Its subcellular location is the cytoplasm. It catalyses the reaction 2 reduced [nitric oxide reductase rubredoxin domain] + NAD(+) + H(+) = 2 oxidized [nitric oxide reductase rubredoxin domain] + NADH. It functions in the pathway nitrogen metabolism; nitric oxide reduction. In terms of biological role, one of at least two accessory proteins for anaerobic nitric oxide (NO) reductase. Reduces the rubredoxin moiety of NO reductase. The protein is Nitric oxide reductase FlRd-NAD(+) reductase of Aliivibrio fischeri (strain ATCC 700601 / ES114) (Vibrio fischeri).